Reading from the N-terminus, the 1250-residue chain is Immunoglobulin superfamily DCC subclass member 4 (1250 aa).

The N-terminal stretch at 1–24 (MARGDAGRGRGLLALTFCLLAARG) is a signal peptide. The Extracellular segment spans residues 25–957 (ELLLPQETTV…SDSLDMHSVT (933 aa)). Ig-like C2-type domains are found at residues 29 to 137 (PQET…TAVV), 143 to 229 (ADFS…ALLS), 242 to 330 (QDVV…AELR), and 335 to 421 (PAIT…ASLA). Residues Cys-57 and Cys-121 are joined by a disulfide bond. Residues Asn-90, Asn-102, and Asn-157 are each glycosylated (N-linked (GlcNAc...) asparagine). A disulfide bridge links Cys-164 with Cys-212. N-linked (GlcNAc...) asparagine glycosylation occurs at Asn-252. 2 disulfide bridges follow: Cys-265–Cys-312 and Cys-356–Cys-405. Fibronectin type-III domains lie at 431-525 (APTR…TLDD), 527-623 (PSAA…TPSM), 632-741 (APAE…APAP), 752-845 (PPAH…TLPD), and 850-945 (PPSD…TLQE). An N-linked (GlcNAc...) asparagine glycan is attached at Asn-582. A helical transmembrane segment spans residues 958–978 (GIIVGVCLGLLCLLACMCAGL). Residues 979–1250 (RRSPHRESLP…LPRSPVSSSA (272 aa)) are Cytoplasmic-facing. Thr-995 is modified (phosphothreonine). 2 disordered regions span residues 1140 to 1175 (SASN…DPGQ) and 1215 to 1250 (PGEV…SSSA).

It belongs to the immunoglobulin superfamily. DCC family.

It is found in the cell membrane. This chain is Immunoglobulin superfamily DCC subclass member 4 (IGDCC4), found in Homo sapiens (Human).